The following is a 298-amino-acid chain: 3-deoxy-manno-octulosonate cytidylyltransferase (298 aa).

The chain crosses the membrane as a helical span at residues 22 to 42; it reads VWVLHGLALGAAAAAAAVAYL.

The protein belongs to the KdsB family. It depends on Mg(2+) as a cofactor. Ubiquitous.

The protein localises to the membrane. The catalysed reaction is 3-deoxy-alpha-D-manno-oct-2-ulosonate + CTP = CMP-3-deoxy-beta-D-manno-octulosonate + diphosphate. It functions in the pathway nucleotide-sugar biosynthesis; CMP-3-deoxy-D-manno-octulosonate biosynthesis; CMP-3-deoxy-D-manno-octulosonate from 3-deoxy-D-manno-octulosonate and CTP: step 1/1. Functionally, catalyzes the production of the sugar nucleotide CMP-3-deoxy-D-manno-octulosonate (CMP-KDO). CTP is the preferred nucleotide donor, and it can partially be replaced with UTP but not with ATP. Activates KDO during the biosynthesis of rhamnogalacturonan II (RG-II), a structurally complex pectic polysaccharide of the primary cell wall. RG-II is essential for the cell wall integrity of rapidly growing tissues and pollen tube growth and elongation. The protein is 3-deoxy-manno-octulosonate cytidylyltransferase of Zea mays (Maize).